The following is a 381-amino-acid chain: tRNA-specific 2-thiouridylase MnmA (381 aa).

ATP contacts are provided by residues G9–S16 and M35. The segment at N95–D97 is interaction with target base in tRNA. Catalysis depends on C100, which acts as the Nucleophile. An intrachain disulfide couples C100 to C196. G124 provides a ligand contact to ATP. Positions K146–Q148 are interaction with tRNA. The Cysteine persulfide intermediate role is filled by C196. The segment at R308–Y309 is interaction with tRNA.

This sequence belongs to the MnmA/TRMU family.

It localises to the cytoplasm. It catalyses the reaction S-sulfanyl-L-cysteinyl-[protein] + uridine(34) in tRNA + AH2 + ATP = 2-thiouridine(34) in tRNA + L-cysteinyl-[protein] + A + AMP + diphosphate + H(+). Functionally, catalyzes the 2-thiolation of uridine at the wobble position (U34) of tRNA, leading to the formation of s(2)U34. The polypeptide is tRNA-specific 2-thiouridylase MnmA (Burkholderia multivorans (strain ATCC 17616 / 249)).